The chain runs to 222 residues: Coiled-coil domain-containing protein 43 homolog (222 aa).

The stretch at 80-111 forms a coiled coil; sequence ETENKLKLTNLKLEQELKIKETTQSEINEEEK. Disordered regions lie at residues 102–126 and 159–222; these read TQSE…EQKK and EDNK…KRRL. Composition is skewed to basic and acidic residues over residues 112–126 and 175–212; these read YENP…EQKK and RIAD…EEKK. The stretch at 168–222 forms a coiled coil; that stretch reads GENLNAKRIADEEKAKREKSKIEHQKKVQRDKEALEKQKRDEEKKKTVKKEKRRL. Basic residues predominate over residues 213 to 222; the sequence is KTVKKEKRRL.

It belongs to the CCDC43 family.

The sequence is that of Coiled-coil domain-containing protein 43 homolog from Dictyostelium discoideum (Social amoeba).